Consider the following 404-residue polypeptide: Cysteine desulfurase IscS (404 aa).

Pyridoxal 5'-phosphate is bound by residues 75-76 (AT), Asn-155, Gln-183, and 203-205 (SGH). Lys-206 carries the post-translational modification N6-(pyridoxal phosphate)lysine. Thr-243 lines the pyridoxal 5'-phosphate pocket. Catalysis depends on Cys-328, which acts as the Cysteine persulfide intermediate. [2Fe-2S] cluster is bound at residue Cys-328.

This sequence belongs to the class-V pyridoxal-phosphate-dependent aminotransferase family. NifS/IscS subfamily. As to quaternary structure, homodimer. Forms a heterotetramer with IscU, interacts with other sulfur acceptors. Requires pyridoxal 5'-phosphate as cofactor.

Its subcellular location is the cytoplasm. It catalyses the reaction (sulfur carrier)-H + L-cysteine = (sulfur carrier)-SH + L-alanine. It participates in cofactor biosynthesis; iron-sulfur cluster biosynthesis. Functionally, master enzyme that delivers sulfur to a number of partners involved in Fe-S cluster assembly, tRNA modification or cofactor biosynthesis. Catalyzes the removal of elemental sulfur and selenium atoms from cysteine and selenocysteine to produce alanine. Functions as a sulfur delivery protein for Fe-S cluster synthesis onto IscU, an Fe-S scaffold assembly protein, as well as other S acceptor proteins. Also functions as a selenium delivery protein in the pathway for the biosynthesis of selenophosphate. This Salmonella arizonae (strain ATCC BAA-731 / CDC346-86 / RSK2980) protein is Cysteine desulfurase IscS.